Here is a 656-residue protein sequence, read N- to C-terminus: DNA ligase (656 aa).

Residues 32–36 (DAVYD) and 81–82 (SL) each bind NAD(+). Catalysis depends on Lys-112, which acts as the N6-AMP-lysine intermediate. 3 residues coordinate NAD(+): Arg-133, Glu-167, and Lys-306. Zn(2+) is bound by residues Cys-400, Cys-403, Cys-416, and Cys-421. In terms of domain architecture, BRCT spans 577–656 (KSSSVFNNKT…ELLKRLKELD (80 aa)).

Belongs to the NAD-dependent DNA ligase family. LigA subfamily. Requires Mg(2+) as cofactor. It depends on Mn(2+) as a cofactor.

The catalysed reaction is NAD(+) + (deoxyribonucleotide)n-3'-hydroxyl + 5'-phospho-(deoxyribonucleotide)m = (deoxyribonucleotide)n+m + AMP + beta-nicotinamide D-nucleotide.. Its function is as follows. DNA ligase that catalyzes the formation of phosphodiester linkages between 5'-phosphoryl and 3'-hydroxyl groups in double-stranded DNA using NAD as a coenzyme and as the energy source for the reaction. It is essential for DNA replication and repair of damaged DNA. This is DNA ligase from Helicobacter pylori (strain P12).